A 278-amino-acid chain; its full sequence is UPF0758 protein BURPS668_0979 (278 aa).

The disordered stretch occupies residues 1–64 (MQYEIVSAGE…ATAAARRGRD (64 aa)). The span at 22-59 (AAAPAAPSSAVPSSAALSSAALSSAARPTGAPPATAAA) shows a compositional bias: low complexity. The MPN domain occupies 156-278 (LVDSPGAVDD…TFSFAQAGWI (123 aa)). Zn(2+) is bound by residues His227, His229, and Asp240. Residues 227–240 (HNHPSGAVRPSAAD) carry the JAMM motif motif.

This sequence belongs to the UPF0758 family.

The chain is UPF0758 protein BURPS668_0979 from Burkholderia pseudomallei (strain 668).